We begin with the raw amino-acid sequence, 397 residues long: Subtilisin-like serine protease Pen ch 13.0101 (397 aa).

Residues 1–19 (MGFLKVLATSLATLAVVDA) form the signal peptide. The propeptide at 20 to 115 (GTLLTASNTD…IEPDMIVNAT (96 aa)) is removed in mature form. Residues 35 to 113 (SYIVVMNDDV…KYIEPDMIVN (79 aa)) enclose the Inhibitor I9 domain. N-linked (GlcNAc...) asparagine glycosylation occurs at Asn-113. Residues 125-397 (SWGLARISSK…SKLLYNGINV (273 aa)) form the Peptidase S8 domain. Active-site charge relay system residues include Asp-157 and His-188. N-linked (GlcNAc...) asparagine glycans are attached at residues Asn-249 and Asn-284. The active-site Charge relay system is the Ser-343.

It belongs to the peptidase S8 family.

The protein resides in the secreted. Functionally, serine protease. In Penicillium rubens, this protein is Subtilisin-like serine protease Pen ch 13.0101.